A 189-amino-acid polypeptide reads, in one-letter code: Inosine triphosphate pyrophosphatase (189 aa).

14-19 (TGNQNK) provides a ligand contact to ITP. A Mg(2+)-binding site is contributed by E42. ITP-binding positions include K54, 70–71 (DT), K87, 146–149 (FGWD), K167, and 172–173 (HR).

It belongs to the HAM1 NTPase family. As to quaternary structure, homodimer. The cofactor is Mg(2+). Mn(2+) serves as cofactor.

It localises to the cytoplasm. It is found in the nucleus. It carries out the reaction ITP + H2O = IMP + diphosphate + H(+). It catalyses the reaction dITP + H2O = dIMP + diphosphate + H(+). The catalysed reaction is XTP + H2O = XMP + diphosphate + H(+). Functionally, pyrophosphatase that hydrolyzes non-canonical purine nucleotides such as inosine triphosphate (ITP), deoxyinosine triphosphate (dITP) or xanthosine 5'-triphosphate (XTP) to their respective monophosphate derivatives. The enzyme does not distinguish between the deoxy- and ribose forms. Probably excludes non-canonical purines from RNA and DNA precursor pools, thus preventing their incorporation into RNA and DNA and avoiding chromosomal lesions. The sequence is that of Inosine triphosphate pyrophosphatase from Pyricularia oryzae (strain 70-15 / ATCC MYA-4617 / FGSC 8958) (Rice blast fungus).